A 495-amino-acid chain; its full sequence is ATP-dependent RNA helicase dbp3 (495 aa).

The span at 1-14 (MAKRELQDKGSTEH) shows a compositional bias: basic and acidic residues. The interval 1–49 (MAKRELQDKGSTEHRAKKKSRNEKHTKKAEDSQASAQSSETQYTDPKEP) is disordered. The span at 15-27 (RAKKKSRNEKHTK) shows a compositional bias: basic residues. The short motif at 97 to 105 (SFTSPTAIQ) is the Q motif element. Residues 109 to 284 (WPFLFSGRDV…ATFMTSPVTV (176 aa)) form the Helicase ATP-binding domain. 122–129 (AETGSGKT) contacts ATP. The DEAD box signature appears at 231-234 (DEAD). In terms of domain architecture, Helicase C-terminal spans 315-464 (RLVQLLNKYQ…DVPEDLLKFG (150 aa)).

This sequence belongs to the DEAD box helicase family. DDX5/DBP2 subfamily.

The protein localises to the nucleus. Its subcellular location is the nucleolus. It catalyses the reaction ATP + H2O = ADP + phosphate + H(+). ATP-dependent RNA helicase required for 60S ribosomal subunit synthesis. Involved in efficient pre-rRNA processing, predominantly at site A3, which is necessary for the normal formation of 25S and 5.8S rRNAs. In Aspergillus niger (strain ATCC MYA-4892 / CBS 513.88 / FGSC A1513), this protein is ATP-dependent RNA helicase dbp3 (dbp3).